Consider the following 453-residue polypeptide: UDP-N-acetylmuramate--L-alanine ligase (453 aa).

112–118 (GTHGKTT) is a binding site for ATP.

The protein belongs to the MurCDEF family.

It localises to the cytoplasm. It catalyses the reaction UDP-N-acetyl-alpha-D-muramate + L-alanine + ATP = UDP-N-acetyl-alpha-D-muramoyl-L-alanine + ADP + phosphate + H(+). It participates in cell wall biogenesis; peptidoglycan biosynthesis. In terms of biological role, cell wall formation. This is UDP-N-acetylmuramate--L-alanine ligase from Bdellovibrio bacteriovorus (strain ATCC 15356 / DSM 50701 / NCIMB 9529 / HD100).